We begin with the raw amino-acid sequence, 285 residues long: Polyamine aminopropyltransferase (285 aa).

Positions 5-241 (DSWFTEHFQA…GWWSVTLSSK (237 aa)) constitute a PABS domain. Position 35 (glutamine 35) interacts with S-methyl-5'-thioadenosine. Positions 66 and 90 each coordinate spermidine. Residues aspartate 110 and 141 to 142 (DG) contribute to the S-methyl-5'-thioadenosine site. The active-site Proton acceptor is aspartate 160. 160 to 163 (DSTD) is a spermidine binding site. Proline 167 lines the S-methyl-5'-thioadenosine pocket.

It belongs to the spermidine/spermine synthase family. As to quaternary structure, homodimer or homotetramer.

Its subcellular location is the cytoplasm. It carries out the reaction S-adenosyl 3-(methylsulfanyl)propylamine + putrescine = S-methyl-5'-thioadenosine + spermidine + H(+). It functions in the pathway amine and polyamine biosynthesis; spermidine biosynthesis; spermidine from putrescine: step 1/1. Its function is as follows. Catalyzes the irreversible transfer of a propylamine group from the amino donor S-adenosylmethioninamine (decarboxy-AdoMet) to putrescine (1,4-diaminobutane) to yield spermidine. The chain is Polyamine aminopropyltransferase from Xylella fastidiosa (strain 9a5c).